We begin with the raw amino-acid sequence, 177 residues long: Alkyl hydroperoxide reductase AhpD (177 aa).

Cys-133 (proton donor) is an active-site residue. Residues Cys-133 and Cys-136 are joined by a disulfide bond. Cys-136 (cysteine sulfenic acid (-SOH) intermediate) is an active-site residue.

Belongs to the AhpD family.

It catalyses the reaction N(6)-[(R)-dihydrolipoyl]-L-lysyl-[lipoyl-carrier protein] + a hydroperoxide = N(6)-[(R)-lipoyl]-L-lysyl-[lipoyl-carrier protein] + an alcohol + H2O. Antioxidant protein with alkyl hydroperoxidase activity. Required for the reduction of the AhpC active site cysteine residues and for the regeneration of the AhpC enzyme activity. The sequence is that of Alkyl hydroperoxide reductase AhpD from Coxiella burnetii (strain CbuG_Q212) (Coxiella burnetii (strain Q212)).